Consider the following 1519-residue polypeptide: Dicer-like protein 1 (1519 aa).

Polar residues predominate over residues 1–13 (MTHQNTETASLAT). Residues 1–62 (MTHQNTETAS…KDPSQRQRQQ (62 aa)) form a disordered region. The span at 39–48 (SDESEGSEEE) shows a compositional bias: acidic residues. Residues 116–297 (LFERAKVQNT…EAARNLEALL (182 aa)) enclose the Helicase ATP-binding domain. 129 to 136 (LDTGSGKT) contacts ATP. Positions 242-245 (DEAH) match the DEAH box motif. Residues 431–601 (ALSSKVRVLW…QLLPEDRILH (171 aa)) form the Helicase C-terminal domain. The 91-residue stretch at 634–724 (AITVLARYAS…NSVYHRRLPA (91 aa)) folds into the Dicer dsRNA-binding fold domain. The PAZ domain maps to 882–1001 (DDIEYQADMP…ICIEPLKISA (120 aa)). RNase III domains lie at 1026-1184 (GLEA…LTPG) and 1235-1387 (CRRV…VDSN). Mg(2+)-binding residues include Glu1275, Asp1373, and Glu1376. The DRBM domain occupies 1421-1489 (TFLHNKLTNE…SENALTELLH (69 aa)). Zn(2+)-binding residues include Cys1433, His1460, Cys1501, and Cys1503.

It belongs to the helicase family. Dicer subfamily. It depends on Mg(2+) as a cofactor. Mn(2+) serves as cofactor.

Its function is as follows. Dicer-like endonuclease involved in cleaving double-stranded RNA in the RNA interference (RNAi) pathway. Produces 21 to 25 bp dsRNAs (siRNAs) which target the selective destruction of homologous RNAs leading to sequence-specific suppression of gene expression, called post-transcriptional gene silencing (PTGS). Part of a broad host defense response against viral infection and transposons. This Aspergillus terreus (strain NIH 2624 / FGSC A1156) protein is Dicer-like protein 1 (dcl1).